Consider the following 61-residue polypeptide: Defensin BmKDfsin1 (61 aa).

The first 25 residues, 1–25 (MKTIVLLFVLVLVFALLVKMGMVEA), serve as a signal peptide directing secretion. Intrachain disulfides connect Cys-29/Cys-50, Cys-36/Cys-58, and Cys-40/Cys-60.

Belongs to the invertebrate defensin family. Type 2 subfamily. In terms of tissue distribution, highly expressed in non-venom gland (hemolymph) and moderately expressed in venom gland.

Its subcellular location is the secreted. In terms of biological role, antibacterial peptide active against Gram-positive bacteria, but not on Gram-negative bacteria. Also has weak blocking activity on Kv1.1/KCNA1, Kv1.2/KCNA2, Kv1.3/KCNA3, KCa3.1/KCNN4/IK, KCa2.3/KCNN3/SK3 and Kv11.1/KCNH2/ERG1 channels (tested at 1 uM). It inhibits potassium channel current by interacting with the pore region. This chain is Defensin BmKDfsin1, found in Olivierus martensii (Manchurian scorpion).